A 415-amino-acid polypeptide reads, in one-letter code: Casein kinase I isoform delta (415 aa).

Positions tyrosine 9–phenylalanine 277 constitute a Protein kinase domain. ATP contacts are provided by residues isoleucine 15–isoleucine 23 and lysine 38. Aspartate 128 acts as the Proton acceptor in catalysis. Positions alanine 301–leucine 315 are enriched in basic and acidic residues. Residues alanine 301–arginine 415 form a disordered region. The segment at histidine 317–proline 342 is autoinhibitory. Residues threonine 341–threonine 352 show a composition bias toward low complexity. The span at asparagine 380–arginine 415 shows a compositional bias: polar residues.

This sequence belongs to the protein kinase superfamily. Monomer. Interacts with per1 and per2. Component of the circadian core oscillator. In terms of processing, autophosphorylated on serine and threonine residues. Detected in retina photoreceptor cells.

The protein localises to the cytoplasm. The protein resides in the nucleus. The catalysed reaction is L-seryl-[protein] + ATP = O-phospho-L-seryl-[protein] + ADP + H(+). The enzyme catalyses L-threonyl-[protein] + ATP = O-phospho-L-threonyl-[protein] + ADP + H(+). It carries out the reaction L-seryl-[tau protein] + ATP = O-phospho-L-seryl-[tau protein] + ADP + H(+). It catalyses the reaction L-threonyl-[tau protein] + ATP = O-phospho-L-threonyl-[tau protein] + ADP + H(+). With respect to regulation, exhibits substrate-dependent heparin activation. In terms of biological role, casein kinases are operationally defined by their preferential utilization of acidic proteins such as caseins as substrates. Can phosphorylate a large number of proteins. Central component of the circadian clock. May act as a negative regulator of circadian rhythmicity by phosphorylating per1 and per2, which may lead to their degradation. Participates in wnt signaling. Functionally, has no kinase activity. The sequence is that of Casein kinase I isoform delta (csnk1d) from Xenopus laevis (African clawed frog).